A 180-amino-acid polypeptide reads, in one-letter code: MSLDKKTVADRYAKALFELVDADNELDQTYQELIALRQVFEDNEGLDAALAGVQLSLDEKKSLIKDLQQGASKYVANLIQMVFDYGRIDCMVAIIDEFERRYDRKMKRMHADVTTAIQLDKQQEDQLKANLAKRFGANEVTLTKHVDPEILGGVIVHVDNKTLDGSLSSKIKQIRRLLVR.

The protein belongs to the ATPase delta chain family. F-type ATPases have 2 components, F(1) - the catalytic core - and F(0) - the membrane proton channel. F(1) has five subunits: alpha(3), beta(3), gamma(1), delta(1), epsilon(1). F(0) has three main subunits: a(1), b(2) and c(10-14). The alpha and beta chains form an alternating ring which encloses part of the gamma chain. F(1) is attached to F(0) by a central stalk formed by the gamma and epsilon chains, while a peripheral stalk is formed by the delta and b chains.

The protein resides in the cell membrane. In terms of biological role, f(1)F(0) ATP synthase produces ATP from ADP in the presence of a proton or sodium gradient. F-type ATPases consist of two structural domains, F(1) containing the extramembraneous catalytic core and F(0) containing the membrane proton channel, linked together by a central stalk and a peripheral stalk. During catalysis, ATP synthesis in the catalytic domain of F(1) is coupled via a rotary mechanism of the central stalk subunits to proton translocation. Functionally, this protein is part of the stalk that links CF(0) to CF(1). It either transmits conformational changes from CF(0) to CF(1) or is implicated in proton conduction. This is ATP synthase subunit delta from Limosilactobacillus reuteri (strain DSM 20016) (Lactobacillus reuteri).